Consider the following 394-residue polypeptide: THAP domain-containing protein 5 (394 aa).

The segment at 1 to 84 adopts a THAP-type zinc-finger fold; it reads MPRYCAAICC…LKQTAIPTIF (84 aa). A disordered region spans residues 86–109; the sequence is LPEDNQEKDPSKKKSQKKKLKSEK. The short motif at 320 to 323 is the HCFC1-binding motif (HBM) element; sequence EHSY. Positions 347–381 form a coiled coil; sequence LELQEQQTLGRLKSLEALIRQLKQENWLSEENVKI.

As to quaternary structure, interacts with HTRA2; under apoptotic conditions. Interacts with ABRAXAS2. In terms of processing, cleaved by HTRA2 during apoptosis.

The protein resides in the nucleus. In terms of biological role, has sequence-specific DNA-binding activity and can function as transcriptional repressor (in vitro). May be a regulator of cell cycle: THAP5 overexpression in human cell lines causes cell cycle arrest at G2/M phase. The chain is THAP domain-containing protein 5 (THAP5) from Bos taurus (Bovine).